Reading from the N-terminus, the 404-residue chain is Na(+)/H(+) antiporter NhaA 2 (404 aa).

11 helical membrane passes run 24–44 (GIILLICAIAAIMIANSSFSG), 67–87 (VLHWINDGLMAIFFLVVGMEI), 103–123 (ILPISAAIGGMIVPAIIYALF), 132–152 (GWGIPMATDIAFALGMLSLVA), 161–181 (VFLTALAIVDDLGAIIVIAIF), 184–204 (SQISWIALLLGLIVFATLILA), 216–236 (IILGIILWICLLKSGIHATIA), 266–286 (TPWSSFVIMPIFAFANAGIII), 303–323 (IIFGLFVGKQIGIFGTSFILI), 339–359 (LYGASVFGGIGFTMSIFVSSL), and 372–392 (MCIMIASILAATYGTIVFKFI).

The protein belongs to the NhaA Na(+)/H(+) (TC 2.A.33) antiporter family.

The protein localises to the cell membrane. The catalysed reaction is Na(+)(in) + 2 H(+)(out) = Na(+)(out) + 2 H(+)(in). Its function is as follows. Na(+)/H(+) antiporter that extrudes sodium in exchange for external protons. This Clostridium beijerinckii (strain ATCC 51743 / NCIMB 8052) (Clostridium acetobutylicum) protein is Na(+)/H(+) antiporter NhaA 2.